The primary structure comprises 244 residues: DNA repair protein RecO (244 aa).

It belongs to the RecO family.

Functionally, involved in DNA repair and RecF pathway recombination. This chain is DNA repair protein RecO, found in Polynucleobacter necessarius subsp. necessarius (strain STIR1).